Here is a 104-residue protein sequence, read N- to C-terminus: Large ribosomal subunit protein bL21 (104 aa).

This sequence belongs to the bacterial ribosomal protein bL21 family. Part of the 50S ribosomal subunit. Contacts protein L20.

Its function is as follows. This protein binds to 23S rRNA in the presence of protein L20. This chain is Large ribosomal subunit protein bL21, found in Pseudomonas entomophila (strain L48).